The chain runs to 366 residues: Neuropeptide Y receptor type 1 (366 aa).

Over 1–39 the chain is Extracellular; the sequence is MNFSTYFENLSVPNNISGNITFPISEDCALPLPMIFTLA. N-linked (GlcNAc...) asparagine glycosylation is found at N2, N9, and N15. The chain crosses the membrane as a helical span at residues 40-60; it reads LAYGAVIILGLSGNLALIIII. The Cytoplasmic segment spans residues 61 to 82; that stretch reads LKQKEMRNVTNILIVNLSFSDL. A helical transmembrane segment spans residues 83–103; sequence LATIMCLPFTLIYTLMDHWIF. Residues 104-111 are Extracellular-facing; sequence GEVMCKLN. C108 and C193 form a disulfide bridge. The helical transmembrane segment at 112-132 threads the bilayer; it reads EYIQCVSVTVSIFSLVLIAIE. Residues 133 to 149 are Cytoplasmic-facing; it reads RHQLIINPRGWRPNNRH. Residues 150-170 traverse the membrane as a helical segment; that stretch reads ACFGITVIWGFAMACSTPLMM. At 171–203 the chain is on the extracellular side; it reads YSVLTDEPFKNISLDSYIGKYVCLEDFPEDKFR. N-linked (GlcNAc...) asparagine glycosylation occurs at N181. The chain crosses the membrane as a helical span at residues 204 to 224; that stretch reads LSYTTLLFILQYLGPLCFIFV. At 225–260 the chain is on the cytoplasmic side; it reads CYTKIFLRLKRRNNMMDKIRDNKYRSSETKRINIML. A helical membrane pass occupies residues 261–281; sequence LSIVVGFALCWLPFFIFNLVF. Residues 282 to 294 are Extracellular-facing; that stretch reads DWNHEAVATCNHN. A helical membrane pass occupies residues 295–315; that stretch reads LLFLICHLTAMISTCVNPIFY. Topologically, residues 316–366 are cytoplasmic; it reads GFLNKNFQRDLQFFFNFCDFRSREDDYETIAMSTMHTDVSKTSLKQASPIA. A lipid anchor (S-palmitoyl cysteine) is attached at C333.

Belongs to the G-protein coupled receptor 1 family.

It is found in the cell membrane. In terms of biological role, receptor for neuropeptide Y and peptide YY. This chain is Neuropeptide Y receptor type 1 (npy1r), found in Xenopus laevis (African clawed frog).